Consider the following 235-residue polypeptide: Uridylate kinase (235 aa).

9–12 contacts ATP; sequence KLSG. Gly-51 serves as a coordination point for UMP. The ATP site is built by Gly-52 and Arg-56. Residues Asp-71 and 133 to 140 each bind UMP; that span reads SGNPFFTT. Thr-160, Tyr-166, and Asp-169 together coordinate ATP.

The protein belongs to the UMP kinase family. As to quaternary structure, homohexamer.

The protein resides in the cytoplasm. The catalysed reaction is UMP + ATP = UDP + ADP. It functions in the pathway pyrimidine metabolism; CTP biosynthesis via de novo pathway; UDP from UMP (UMPK route): step 1/1. Its activity is regulated as follows. Inhibited by UTP. In terms of biological role, catalyzes the reversible phosphorylation of UMP to UDP. This Gloeobacter violaceus (strain ATCC 29082 / PCC 7421) protein is Uridylate kinase.